A 209-amino-acid chain; its full sequence is Uracil phosphoribosyltransferase (209 aa).

5-phospho-alpha-D-ribose 1-diphosphate-binding positions include R79, R104, and 131 to 139 (DPMLATGGS). Uracil is bound by residues I194 and 199–201 (GDA). D200 lines the 5-phospho-alpha-D-ribose 1-diphosphate pocket.

The protein belongs to the UPRTase family. Mg(2+) serves as cofactor.

It carries out the reaction UMP + diphosphate = 5-phospho-alpha-D-ribose 1-diphosphate + uracil. It participates in pyrimidine metabolism; UMP biosynthesis via salvage pathway; UMP from uracil: step 1/1. Its activity is regulated as follows. Allosterically activated by GTP. In terms of biological role, catalyzes the conversion of uracil and 5-phospho-alpha-D-ribose 1-diphosphate (PRPP) to UMP and diphosphate. This Clostridium novyi (strain NT) protein is Uracil phosphoribosyltransferase.